A 512-amino-acid polypeptide reads, in one-letter code: D-alanine--D-alanyl carrier protein ligase (512 aa).

Residue 152–153 (TS) participates in ATP binding. A D-alanine-binding site is contributed by Asp199. 294–299 (NAYGPT) provides a ligand contact to ATP. A D-alanine-binding site is contributed by Val303. Residues Asp385, 397-400 (YGGR), and Lys499 each bind ATP. Lys499 lines the D-alanine pocket.

Belongs to the ATP-dependent AMP-binding enzyme family. DltA subfamily.

The protein localises to the cytoplasm. It carries out the reaction holo-[D-alanyl-carrier protein] + D-alanine + ATP = D-alanyl-[D-alanyl-carrier protein] + AMP + diphosphate. Its pathway is cell wall biogenesis; lipoteichoic acid biosynthesis. Its function is as follows. Catalyzes the first step in the D-alanylation of lipoteichoic acid (LTA), the activation of D-alanine and its transfer onto the D-alanyl carrier protein (Dcp) DltC. In an ATP-dependent two-step reaction, forms a high energy D-alanyl-AMP intermediate, followed by transfer of the D-alanyl residue as a thiol ester to the phosphopantheinyl prosthetic group of the Dcp. D-alanylation of LTA plays an important role in modulating the properties of the cell wall in Gram-positive bacteria, influencing the net charge of the cell wall. The protein is D-alanine--D-alanyl carrier protein ligase of Streptococcus pyogenes serotype M4 (strain MGAS10750).